Here is a 195-residue protein sequence, read N- to C-terminus: ATP-dependent Clp protease proteolytic subunit (195 aa).

The active-site Nucleophile is the Ser98. The active site involves His123.

This sequence belongs to the peptidase S14 family. Fourteen ClpP subunits assemble into 2 heptameric rings which stack back to back to give a disk-like structure with a central cavity, resembling the structure of eukaryotic proteasomes.

It is found in the cytoplasm. It catalyses the reaction Hydrolysis of proteins to small peptides in the presence of ATP and magnesium. alpha-casein is the usual test substrate. In the absence of ATP, only oligopeptides shorter than five residues are hydrolyzed (such as succinyl-Leu-Tyr-|-NHMec, and Leu-Tyr-Leu-|-Tyr-Trp, in which cleavage of the -Tyr-|-Leu- and -Tyr-|-Trp bonds also occurs).. Its function is as follows. Cleaves peptides in various proteins in a process that requires ATP hydrolysis. Has a chymotrypsin-like activity. Plays a major role in the degradation of misfolded proteins. The polypeptide is ATP-dependent Clp protease proteolytic subunit (Staphylococcus haemolyticus (strain JCSC1435)).